A 276-amino-acid polypeptide reads, in one-letter code: Urease accessory protein UreD (276 aa).

This sequence belongs to the UreD family. UreD, UreF and UreG form a complex that acts as a GTP-hydrolysis-dependent molecular chaperone, activating the urease apoprotein by helping to assemble the nickel containing metallocenter of UreC. The UreE protein probably delivers the nickel.

Its subcellular location is the cytoplasm. Required for maturation of urease via the functional incorporation of the urease nickel metallocenter. The protein is Urease accessory protein UreD of Bradyrhizobium diazoefficiens (strain JCM 10833 / BCRC 13528 / IAM 13628 / NBRC 14792 / USDA 110).